The sequence spans 222 residues: MTTKLARFAQKRWISSTTSTSNMYDPRVFRDPVTNVQELRKPLDSDDERNFLFLKAMKSDATPVFYRDHVIDKLIRVCTKDGEKETSRKNVLSALEIIKRRQYKAWAKASEEEKKSIELDPFLVAKKGIKNCHPLMKLQGVTRGGTTYQVPFPIEEPEAEFRAMKMMRDICRVRSKHGETHFKDILATELLAASQNEGSTIQAKQELHKTCEANRAYAHYRA.

The N-terminal 14 residues, 1–14 (MTTKLARFAQKRWI), are a transit peptide targeting the mitochondrion.

It belongs to the universal ribosomal protein uS7 family. In terms of assembly, component of the mitochondrial ribosome small subunit (28S) which comprises a 12S rRNA and about 30 distinct proteins.

Its subcellular location is the mitochondrion. The polypeptide is Small ribosomal subunit protein uS7m (mrps-7) (Caenorhabditis elegans).